A 276-amino-acid polypeptide reads, in one-letter code: MQQQIVEEMKVKVSIDPVEEIKKRVDFIKGKLLEAHCKSLILGISGGVDSTTCGRLAQLAVNELNLETQSSDYQFIAVRLPYGIQQDEDEAQLALQFIQPTHSISINIKNGVDGLHSANHIALKDTGLLPTDSAKIDFVKGNVKARARMIAQYEVAGYVGGLVLGTDHSAENITGFYTKFGDGACDLAPLFGLNKRQVREVAAQLGAPEQLVKKVPTADLEELAPQKADEDALSVSYDQIDDFLEGKKIDADAEDRLIKIYQMSQHKRKPIPTIYD.

ATP is bound at residue 43-50; sequence GISGGVDS. D49 lines the Mg(2+) pocket. R146 lines the deamido-NAD(+) pocket. T166 is a binding site for ATP. E171 is a Mg(2+) binding site. Deamido-NAD(+) contacts are provided by K179 and D186. Residues K195 and T217 each coordinate ATP. 266–267 is a binding site for deamido-NAD(+); the sequence is HK.

Belongs to the NAD synthetase family. In terms of assembly, homodimer.

The enzyme catalyses deamido-NAD(+) + NH4(+) + ATP = AMP + diphosphate + NAD(+) + H(+). It participates in cofactor biosynthesis; NAD(+) biosynthesis; NAD(+) from deamido-NAD(+) (ammonia route): step 1/1. Its function is as follows. Catalyzes the ATP-dependent amidation of deamido-NAD to form NAD. Uses ammonia as a nitrogen source. The polypeptide is NH(3)-dependent NAD(+) synthetase (Aliivibrio fischeri (strain ATCC 700601 / ES114) (Vibrio fischeri)).